The chain runs to 201 residues: Molybdenum cofactor guanylyltransferase (201 aa).

Residues 15-17, lysine 28, aspartate 74, and aspartate 104 each bind GTP; that span reads LCG. Aspartate 104 is a binding site for Mg(2+).

It belongs to the MobA family. Monomer. Requires Mg(2+) as cofactor.

It is found in the cytoplasm. The enzyme catalyses Mo-molybdopterin + GTP + H(+) = Mo-molybdopterin guanine dinucleotide + diphosphate. Transfers a GMP moiety from GTP to Mo-molybdopterin (Mo-MPT) cofactor (Moco or molybdenum cofactor) to form Mo-molybdopterin guanine dinucleotide (Mo-MGD) cofactor. In Ectopseudomonas mendocina (strain ymp) (Pseudomonas mendocina), this protein is Molybdenum cofactor guanylyltransferase.